Reading from the N-terminus, the 105-residue chain is Putative ferredoxin-3 (105 aa).

4Fe-4S ferredoxin-type domains lie at Tyr17–Ile46 and Thr70–Ala100. The [4Fe-4S] cluster site is built by Cys26, Cys29, Cys32, Cys36, Cys80, Cys83, Cys86, and Cys90.

It depends on [4Fe-4S] cluster as a cofactor.

Functionally, ferredoxins are iron-sulfur proteins that transfer electrons in a wide variety of metabolic reactions. In Sinorhizobium fredii (strain NBRC 101917 / NGR234), this protein is Putative ferredoxin-3 (fdxB).